Reading from the N-terminus, the 1003-residue chain is Glycine--tRNA ligase (1003 aa).

The glycine--tRNA ligase alpha subunit stretch occupies residues 1 to 310; sequence MSSQPLTLQD…VTAKQIPHIC (310 aa). The segment at 311–1003 is glycine--tRNA ligase beta subunit; the sequence is QDEDFLLEIG…CFGFYAWDAL (693 aa).

This sequence belongs to the class-II aminoacyl-tRNA synthetase family.

It is found in the cytoplasm. It catalyses the reaction tRNA(Gly) + glycine + ATP = glycyl-tRNA(Gly) + AMP + diphosphate. The sequence is that of Glycine--tRNA ligase (glyQS) from Chlamydia muridarum (strain MoPn / Nigg).